A 286-amino-acid chain; its full sequence is MPELPEVEVVRRGLERWVAHRTVADVEVLHPRAVRRHTAGGEDFAHRLKGRRVGVPSRRGKYLWLPLETTDTAVLAHLGMSGQLLVQPHDCADERHLRIRVRFADALGTELRFVDQRTFGGLSLHDTTPDGLPDVIAHIARDPLDPLFDDAAFHEALRRKRTTVKRALLDQSLISGVGNIYADEALWRARIHYERPTAGFTRPRTAELLGHVRDVMNAALAVGGTSFDSLYVNVNGESGYFDRSLDAYGREGLPCRRCATPMRRRPWMNRSSYFCPKCQRAPRVTV.

The active-site Schiff-base intermediate with DNA is P2. E3 functions as the Proton donor in the catalytic mechanism. K61 (proton donor; for beta-elimination activity) is an active-site residue. H96, R117, and K160 together coordinate DNA. The FPG-type zinc finger occupies D246 to R280. R270 functions as the Proton donor; for delta-elimination activity in the catalytic mechanism.

The protein belongs to the FPG family. As to quaternary structure, monomer. The cofactor is Zn(2+).

The catalysed reaction is Hydrolysis of DNA containing ring-opened 7-methylguanine residues, releasing 2,6-diamino-4-hydroxy-5-(N-methyl)formamidopyrimidine.. It carries out the reaction 2'-deoxyribonucleotide-(2'-deoxyribose 5'-phosphate)-2'-deoxyribonucleotide-DNA = a 3'-end 2'-deoxyribonucleotide-(2,3-dehydro-2,3-deoxyribose 5'-phosphate)-DNA + a 5'-end 5'-phospho-2'-deoxyribonucleoside-DNA + H(+). Functionally, involved in base excision repair of DNA damaged by oxidation or by mutagenic agents. Acts as a DNA glycosylase that recognizes and removes damaged bases. Has a preference for oxidized purines, such as 7,8-dihydro-8-oxoguanine (8-oxoG). Has AP (apurinic/apyrimidinic) lyase activity and introduces nicks in the DNA strand. Cleaves the DNA backbone by beta-delta elimination to generate a single-strand break at the site of the removed base with both 3'- and 5'-phosphates. The sequence is that of Formamidopyrimidine-DNA glycosylase from Streptomyces avermitilis (strain ATCC 31267 / DSM 46492 / JCM 5070 / NBRC 14893 / NCIMB 12804 / NRRL 8165 / MA-4680).